A 354-amino-acid polypeptide reads, in one-letter code: Heme A synthase (354 aa).

8 helical membrane passes run 21–41 (VAVWLLACCFMVAVMVLLGGL), 106–126 (VWGRLIGVVFGLPFLWLALSG), 139–159 (VFLLGAAQGGMGWFMVKSGLV), 171–191 (AHLALAFLIHGWMFWLALDIL), 212–232 (MLGLTGLVIVTLLFGGLVAGL), 268–288 (VQFGHRTLAEITIVVALVGWF), 304–324 (AVGLMALLQVGLGIGTLVMVV), and 326–346 (VWLASAHQMGAMALLTLCLWA). His272 provides a ligand contact to heme. Heme is bound at residue His332.

This sequence belongs to the COX15/CtaA family. Type 2 subfamily. Interacts with CtaB. Heme b is required as a cofactor.

The protein resides in the cell membrane. The enzyme catalyses Fe(II)-heme o + 2 A + H2O = Fe(II)-heme a + 2 AH2. The protein operates within porphyrin-containing compound metabolism; heme A biosynthesis; heme A from heme O: step 1/1. Functionally, catalyzes the conversion of heme O to heme A by two successive hydroxylations of the methyl group at C8. The first hydroxylation forms heme I, the second hydroxylation results in an unstable dihydroxymethyl group, which spontaneously dehydrates, resulting in the formyl group of heme A. This Paramagnetospirillum magneticum (strain ATCC 700264 / AMB-1) (Magnetospirillum magneticum) protein is Heme A synthase.